A 318-amino-acid chain; its full sequence is L-lactate dehydrogenase (318 aa).

Residues Val18, Asp39, Lys44, Tyr69, and 83 to 84 (GA) each bind NAD(+). Substrate is bound by residues Gln86 and Arg92. NAD(+)-binding positions include Ser105, 122–124 (VSN), and Ser147. 124–127 (NPVD) is a substrate binding site. Position 152–155 (152–155 (DTSR)) interacts with substrate. The active-site Proton acceptor is His179. Tyr225 carries the post-translational modification Phosphotyrosine. Thr234 is a substrate binding site.

This sequence belongs to the LDH/MDH superfamily. LDH family. In terms of assembly, homotetramer.

It localises to the cytoplasm. It carries out the reaction (S)-lactate + NAD(+) = pyruvate + NADH + H(+). It functions in the pathway fermentation; pyruvate fermentation to lactate; (S)-lactate from pyruvate: step 1/1. Catalyzes the conversion of lactate to pyruvate. This chain is L-lactate dehydrogenase, found in Clostridium botulinum (strain Kyoto / Type A2).